The sequence spans 458 residues: NADH-ubiquinone oxidoreductase chain 4 (458 aa).

The next 12 helical transmembrane spans lie at 21 to 43, 58 to 78, 93 to 112, 116 to 138, 145 to 165, 196 to 216, 224 to 244, 257 to 277, 285 to 305, 309 to 329, 341 to 361, and 379 to 399; these read ASLW…QWLN, IDQI…LMLL, RTFI…AFSA, TLFY…RWGN, AGIY…VTIL, GLAL…HLWL, PIAG…YGIM, LSYP…SICL, LIAY…MIQT, FSGA…LFCL, ILLL…WWLL, and LTIM…TGLA.

Belongs to the complex I subunit 4 family.

The protein resides in the mitochondrion membrane. It carries out the reaction a ubiquinone + NADH + 5 H(+)(in) = a ubiquinol + NAD(+) + 4 H(+)(out). In terms of biological role, core subunit of the mitochondrial membrane respiratory chain NADH dehydrogenase (Complex I) that is believed to belong to the minimal assembly required for catalysis. Complex I functions in the transfer of electrons from NADH to the respiratory chain. The immediate electron acceptor for the enzyme is believed to be ubiquinone. This Struthio camelus (Common ostrich) protein is NADH-ubiquinone oxidoreductase chain 4 (MT-ND4).